Reading from the N-terminus, the 238-residue chain is Tetrahydromethanopterin S-methyltransferase subunit A 1 (238 aa).

The Cytoplasmic segment spans residues 2–218 (VEKKSPAEGW…RMFAGMYSGK (217 aa)). His84 contributes to the 5-hydroxybenzimidazolylcob(I)amide binding site. A helical transmembrane segment spans residues 219–237 (VQGIMIGLAFTLTLGILLL). A topological domain (extracellular) is located at residue Val238.

Belongs to the MtrA family. In terms of assembly, the complex is composed of 8 subunits; MtrA, MtrB, MtrC, MtrD, MtrE, MtrF, MtrG and MtrH. It depends on 5-hydroxybenzimidazolylcob(I)amide as a cofactor.

Its subcellular location is the cell membrane. The catalysed reaction is 5-methyl-5,6,7,8-tetrahydromethanopterin + coenzyme M + 2 Na(+)(in) = 5,6,7,8-tetrahydromethanopterin + methyl-coenzyme M + 2 Na(+)(out). It functions in the pathway one-carbon metabolism; methanogenesis from CO(2); methyl-coenzyme M from 5,10-methylene-5,6,7,8-tetrahydromethanopterin: step 2/2. Functionally, part of a complex that catalyzes the formation of methyl-coenzyme M and tetrahydromethanopterin from coenzyme M and methyl-tetrahydromethanopterin. This is an energy-conserving, sodium-ion translocating step. This chain is Tetrahydromethanopterin S-methyltransferase subunit A 1, found in Methanothermobacter thermautotrophicus (strain ATCC 29096 / DSM 1053 / JCM 10044 / NBRC 100330 / Delta H) (Methanobacterium thermoautotrophicum).